Reading from the N-terminus, the 94-residue chain is Scorpine (94 aa).

The first 19 residues, 1-19, serve as a signal peptide directing secretion; sequence MNSKLTALIFLGLIAIAYC. The BetaSPN-type CS-alpha/beta domain maps to 55 to 94; sequence EFQCMANMDMLGNCEKHCQTSGEKGYCHGTKCKCGTPLSY. 3 disulfide bridges follow: Cys-58–Cys-81, Cys-68–Cys-86, and Cys-72–Cys-88.

Belongs to the long chain scorpion toxin family. Class 3 subfamily. In terms of tissue distribution, expressed by the venom gland.

The protein localises to the secreted. It localises to the target cell membrane. In terms of biological role, this full-length protein shows antibacterial activity against B.subtilis and K.pneumoniae. Also shows a potent inhibitory effect on the ookinete (ED(50) 0.7 uM) and gamete (ED(50) 10 uM) stages of Plasmodium berghei development. In addition, induces cell membrane disruption, leakage currents and cell death on HEK293 cell line (tested at 25 uM). This chain is Scorpine, found in Pandinus imperator (Emperor scorpion).